A 239-amino-acid chain; its full sequence is 7-cyano-7-deazaguanine synthase (239 aa).

ATP is bound at residue 13–23 (FSGGQDSTTCL). Residues Cys201, Cys216, Cys219, and Cys222 each contribute to the Zn(2+) site.

This sequence belongs to the QueC family. Zn(2+) serves as cofactor.

The catalysed reaction is 7-carboxy-7-deazaguanine + NH4(+) + ATP = 7-cyano-7-deazaguanine + ADP + phosphate + H2O + H(+). The protein operates within purine metabolism; 7-cyano-7-deazaguanine biosynthesis. Catalyzes the ATP-dependent conversion of 7-carboxy-7-deazaguanine (CDG) to 7-cyano-7-deazaguanine (preQ(0)). The chain is 7-cyano-7-deazaguanine synthase from Bradyrhizobium sp. (strain BTAi1 / ATCC BAA-1182).